We begin with the raw amino-acid sequence, 505 residues long: Adenylosuccinate synthetase, chloroplastic (505 aa).

A chloroplast-targeting transit peptide spans 1–60 (MTTMNISTLRLDSNPITTSTKSTTHRSGALGYNGSYSCRLLQFQKKNKAPSIIVCSTKPL). Residues 92–98 (GDEGKGK) and 120–122 (GHT) each bind GTP. D93 serves as the catalytic Proton acceptor. The Mg(2+) site is built by D93 and G120. IMP-binding positions include 93–96 (DEGK), 118–121 (NAGH), T210, R224, Q304, T319, and R383. The active-site Proton donor is H121. 379 to 385 (TTTGRPR) is a substrate binding site. GTP is bound by residues R385, 411–413 (KLD), and 494–496 (GVG).

This sequence belongs to the adenylosuccinate synthetase family. In terms of assembly, homodimer. The cofactor is Mg(2+).

It localises to the plastid. The protein resides in the chloroplast. It catalyses the reaction IMP + L-aspartate + GTP = N(6)-(1,2-dicarboxyethyl)-AMP + GDP + phosphate + 2 H(+). The protein operates within purine metabolism; AMP biosynthesis via de novo pathway; AMP from IMP: step 1/2. Its function is as follows. Plays an important role in the de novo pathway and in the salvage pathway of purine nucleotide biosynthesis. Catalyzes the first committed step in the biosynthesis of AMP from IMP. This is Adenylosuccinate synthetase, chloroplastic from Nicotiana tabacum (Common tobacco).